The following is a 62-amino-acid chain: uncharacterized protein (62 aa).

This sequence belongs to the asfivirus C62L family.

This is an uncharacterized protein from African swine fever virus (strain Badajoz 1971 Vero-adapted) (Ba71V).